The primary structure comprises 649 residues: Beta-galactosidase-1-like protein 3 (649 aa).

E203 acts as the Proton donor in catalysis. Catalysis depends on E277, which acts as the Nucleophile.

The protein belongs to the glycosyl hydrolase 35 family.

The protein is Beta-galactosidase-1-like protein 3 (Glb1l3) of Mus musculus (Mouse).